The sequence spans 157 residues: Transcriptional repressor NrdR (157 aa).

A zinc finger spans residues 3-34; it reads CPSCQNTDSRVLESRSADAGKCVRRRRECLNC. The 91-residue stretch at 49–139 folds into the ATP-cone domain; it reads VTVIKRSNAK…VYRQFNGIED (91 aa).

The protein belongs to the NrdR family. The cofactor is Zn(2+).

Negatively regulates transcription of bacterial ribonucleotide reductase nrd genes and operons by binding to NrdR-boxes. The protein is Transcriptional repressor NrdR of Prochlorococcus marinus (strain SARG / CCMP1375 / SS120).